The sequence spans 1116 residues: Cation channel sperm-associated auxiliary subunit beta (1116 aa).

Residues 1-1053 (MESPLIYVSV…QIYVDEAPLP (1053 aa)) are Extracellular-facing. Cysteine 35 and cysteine 60 are disulfide-bonded. N-linked (GlcNAc...) asparagine glycans are attached at residues asparagine 90, asparagine 100, asparagine 118, asparagine 226, and asparagine 321. Cysteines 189 and 302 form a disulfide. Cysteine 330 and cysteine 343 are oxidised to a cystine. Residues asparagine 618 and asparagine 690 are each glycosylated (N-linked (GlcNAc...) asparagine). 4 disulfides stabilise this stretch: cysteine 718-cysteine 816, cysteine 829-cysteine 1037, cysteine 911-cysteine 920, and cysteine 922-cysteine 937. N-linked (GlcNAc...) asparagine glycans are attached at residues asparagine 913 and asparagine 921. N-linked (GlcNAc...) asparagine glycans are attached at residues asparagine 1010 and asparagine 1015. The chain crosses the membrane as a helical span at residues 1054 to 1076 (FPGHTLIAVATAVVLGGLIFIAF). At 1077–1116 (MFQLQGIHPWRTFQRWIRRNQEKFSSISLSELIHRSKSEE) the chain is on the cytoplasmic side.

As to quaternary structure, component of the CatSper complex or CatSpermasome composed of the core pore-forming members CATSPER1, CATSPER2, CATSPER3 and CATSPER4 as well as auxiliary members CATSPERB, CATSPERG, CATSPERD, CATSPERE, CATSPERZ, C2CD6/CATSPERT, TMEM249, TMEM262 and EFCAB9. HSPA1 may be an additional auxiliary complex member. The core complex members CATSPER1, CATSPER2, CATSPER3 and CATSPER4 form a heterotetrameric channel. The auxiliary CATSPERB, CATSPERG, CATSPERD and CATSPERE subunits form a pavilion-like structure over the pore which stabilizes the complex through interactions with CATSPER4, CATSPER3, CATSPER1 and CATSPER2 respectively. TMEM262/CATSPERH interacts with CATSPERB, further stabilizing the complex. C2CD6/CATSPERT interacts at least with CATSPERD and is required for targeting the CatSper complex in the flagellar membrane.

The protein resides in the cell projection. It localises to the cilium. It is found in the flagellum membrane. Functionally, auxiliary component of the CatSper complex, a complex involved in sperm cell hyperactivation. Sperm cell hyperactivation is needed for sperm motility which is essential late in the preparation of sperm for fertilization. The chain is Cation channel sperm-associated auxiliary subunit beta from Homo sapiens (Human).